A 681-amino-acid polypeptide reads, in one-letter code: Potassium-transporting ATPase ATP-binding subunit (681 aa).

4 consecutive transmembrane segments (helical) span residues 30 to 50 (LLVYVGAILATSLYFLGFFGI), 59 to 79 (LAIALILWFTVLFANFAEAIA), 216 to 236 (ILLVTLSIIFLAVSATLLPFT), and 255 to 275 (IALLVCLAPTTIGALLSSIGI). Asp306 (4-aspartylphosphate intermediate) is an active-site residue. ATP contacts are provided by residues Asp343, Glu347, 376–383 (FTATTRMS), and Lys394. Residues Asp517 and Asp521 each contribute to the Mg(2+) site. 3 helical membrane-spanning segments follow: residues 587-607 (FAIIPVLFYGIFPQLEALNLM), 615-635 (AILSAIIYNAVIIIVLIPLSL), and 661-681 (LIAPFIAIKLIDMLLTVLGIV).

It belongs to the cation transport ATPase (P-type) (TC 3.A.3) family. Type IA subfamily. In terms of assembly, the system is composed of three essential subunits: KdpA, KdpB and KdpC.

The protein localises to the cell membrane. The catalysed reaction is K(+)(out) + ATP + H2O = K(+)(in) + ADP + phosphate + H(+). Functionally, part of the high-affinity ATP-driven potassium transport (or Kdp) system, which catalyzes the hydrolysis of ATP coupled with the electrogenic transport of potassium into the cytoplasm. This subunit is responsible for energy coupling to the transport system and for the release of the potassium ions to the cytoplasm. The protein is Potassium-transporting ATPase ATP-binding subunit of Listeria monocytogenes serovar 1/2a (strain ATCC BAA-679 / EGD-e).